The following is a 508-amino-acid chain: Histidine ammonia-lyase (508 aa).

A cross-link (5-imidazolinone (Ala-Gly)) is located at residues 141-143; sequence ASG. Serine 142 carries the 2,3-didehydroalanine (Ser) modification.

It belongs to the PAL/histidase family. Contains an active site 4-methylidene-imidazol-5-one (MIO), which is formed autocatalytically by cyclization and dehydration of residues Ala-Ser-Gly.

Its subcellular location is the cytoplasm. It carries out the reaction L-histidine = trans-urocanate + NH4(+). It functions in the pathway amino-acid degradation; L-histidine degradation into L-glutamate; N-formimidoyl-L-glutamate from L-histidine: step 1/3. This chain is Histidine ammonia-lyase (hutH), found in Bacillus subtilis (strain 168).